The following is a 178-amino-acid chain: Large ribosomal subunit protein bL25 (178 aa).

This sequence belongs to the bacterial ribosomal protein bL25 family. CTC subfamily. Part of the 50S ribosomal subunit; part of the 5S rRNA/L5/L18/L25 subcomplex. Contacts the 5S rRNA. Binds to the 5S rRNA independently of L5 and L18.

This is one of the proteins that binds to the 5S RNA in the ribosome where it forms part of the central protuberance. This is Large ribosomal subunit protein bL25 from Helicobacter pylori (strain P12).